We begin with the raw amino-acid sequence, 685 residues long: MIGMNRLIFSKAFTSSCKSVGKVPFAKSITRANTRYFKPTSILQQIRFNSKSSTAPNTEANSNGSTNSQSDTKKPRPKLTSEIFKLLRLAKPESKLIFFALICLVTTSATSMALPLMIGKIIDTTKKDDDDDKDNDNDDKDDTQPSDKLIFGLPQPQFYSALGVLFIVSASTNFGRIYLLRSVGERLVARLRSRLFSKILAQDAYFFDLGPSKTGMKTGDLISRIASDTQIISKSLSMNISDGIRAIISGCVGLSMMCYVSWKLSLCMSLIFPPLITMSWFYGRKIKALSKLIQENIGDMTKVTEEKLNGVKVIQTFSQQQSVVHSYNQEIKNIFNSSMREAKLAGFFYSTNGFIGNVTMIGLLIMGTKLIGAGELTVGDLSSFMMYAVYTGTSVFGLGNFYTELMKGIGAAERVFELVEYQPRISNHLGKKVDELNGDIEFKGIDFTYPSRPESGIFKDLNLHIKQGENVCLVGPSGSGKSTVSQLLLRFYDPEKGTIQIGDDVITDLNLNHYRSKLGYVQQEPLLFSGTIKENILFGKEDATDEEINNALNLSYASNFVRHLPDGLDTKIGASNSTQLSGGQKQRVSLARTLIRDPKILILDEATSALDSVSEEIVMSNLIQLNKNRGVTLISIAHRLSTIKNSDRIIVFNQDGQIVEDGKFNELHNDPNSQFNKLLKSHSLE.

Residues 48–70 (FNSKSSTAPNTEANSNGSTNSQS) are compositionally biased toward polar residues. A disordered region spans residues 48–76 (FNSKSSTAPNTEANSNGSTNSQSDTKKPR). Asparagine 63 is a glycosylation site (N-linked (GlcNAc...) asparagine). Residues 96–116 (LIFFALICLVTTSATSMALPL) traverse the membrane as a helical segment. In terms of domain architecture, ABC transmembrane type-1 spans 97–407 (IFFALICLVT…LGNFYTELMK (311 aa)). Residues 125–147 (TKKDDDDDKDNDNDDKDDTQPSD) are disordered. Positions 129–141 (DDDDKDNDNDDKD) are enriched in acidic residues. The chain crosses the membrane as a helical span at residues 158–180 (FYSALGVLFIVSASTNFGRIYLL). Asparagine 239 is a glycosylation site (N-linked (GlcNAc...) asparagine). The chain crosses the membrane as a helical span at residues 266–282 (LCMSLIFPPLITMSWFY). N-linked (GlcNAc...) asparagine glycosylation is present at asparagine 336. 2 helical membrane passes run 353-373 (GFIG…LIGA) and 381-401 (LSSF…LGNF). An ABC transporter domain is found at 440–680 (IEFKGIDFTY…PNSQFNKLLK (241 aa)). 475 to 482 (GPSGSGKS) is an ATP binding site. Asparagine 553 and asparagine 576 each carry an N-linked (GlcNAc...) asparagine glycan.

This sequence belongs to the ABC transporter superfamily. ABCB family. Mitochondrial peptide exporter (TC 3.A.1.212) subfamily.

It localises to the membrane. In Candida albicans (Yeast), this protein is ATP-dependent permease MDL1 (MDL1).